The primary structure comprises 345 residues: Molybdopterin synthase catalytic subunit (345 aa).

Substrate is bound by residues 101-102 (HR), Lys117, and 124-126 (KKE).

This sequence belongs to the MoaE family. MOCS2B subfamily. Heterotetramer; composed of 2 small (Mocs2A) and 2 large (Mocs2B) subunits.

It localises to the cytoplasm. The catalysed reaction is 2 [molybdopterin-synthase sulfur-carrier protein]-C-terminal-Gly-aminoethanethioate + cyclic pyranopterin phosphate + H2O = molybdopterin + 2 [molybdopterin-synthase sulfur-carrier protein]-C-terminal Gly-Gly + 2 H(+). The protein operates within cofactor biosynthesis; molybdopterin biosynthesis. Functionally, catalytic subunit of the molybdopterin synthase complex, a complex that catalyzes the conversion of precursor Z into molybdopterin. Acts by mediating the incorporation of 2 sulfur atoms from thiocarboxylated Mocs2A into precursor Z to generate a dithiolene group. The protein is Molybdopterin synthase catalytic subunit of Drosophila virilis (Fruit fly).